A 427-amino-acid chain; its full sequence is 3-phosphoshikimate 1-carboxyvinyltransferase (427 aa).

K22, S23, and R27 together coordinate 3-phosphoshikimate. Phosphoenolpyruvate is bound at residue K22. Phosphoenolpyruvate-binding residues include G96 and R124. Residues S170, S171, Q172, S199, D313, N336, and K340 each coordinate 3-phosphoshikimate. Phosphoenolpyruvate is bound at residue Q172. D313 (proton acceptor) is an active-site residue. Residues R344, R386, and K411 each contribute to the phosphoenolpyruvate site.

Belongs to the EPSP synthase family. In terms of assembly, monomer.

The protein resides in the cytoplasm. The catalysed reaction is 3-phosphoshikimate + phosphoenolpyruvate = 5-O-(1-carboxyvinyl)-3-phosphoshikimate + phosphate. The protein operates within metabolic intermediate biosynthesis; chorismate biosynthesis; chorismate from D-erythrose 4-phosphate and phosphoenolpyruvate: step 6/7. Its function is as follows. Catalyzes the transfer of the enolpyruvyl moiety of phosphoenolpyruvate (PEP) to the 5-hydroxyl of shikimate-3-phosphate (S3P) to produce enolpyruvyl shikimate-3-phosphate and inorganic phosphate. This is 3-phosphoshikimate 1-carboxyvinyltransferase from Aeromonas salmonicida.